The chain runs to 808 residues: Sucrose synthase 1 (808 aa).

The segment at 277 to 754 (MVFNVVILSP…GLQRIEEKYT (478 aa)) is GT-B glycosyltransferase.

The protein belongs to the glycosyltransferase 1 family. Plant sucrose synthase subfamily. In terms of assembly, homotetramer. In terms of tissue distribution, expressed in the phloem of leaves and in roots. Detected in the whole plant but more precisely confined to the vasculature in cotyledons, mature leaves and siliques.

The catalysed reaction is an NDP-alpha-D-glucose + D-fructose = a ribonucleoside 5'-diphosphate + sucrose + H(+). Sucrose-cleaving enzyme that provides UDP-glucose and fructose for various metabolic pathways. The polypeptide is Sucrose synthase 1 (SUS1) (Arabidopsis thaliana (Mouse-ear cress)).